Consider the following 320-residue polypeptide: Small ribosomal subunit protein uS15m (320 aa).

Disordered regions lie at residues 37 to 60 (NISQ…AQQR) and 214 to 242 (QSLE…DTGS).

Belongs to the universal ribosomal protein uS15 family. Component of the mitochondrial small ribosomal subunit (mt-SSU). Mature N.crassa 74S mitochondrial ribosomes consist of a small (37S) and a large (54S) subunit. The 37S small subunit contains a 16S ribosomal RNA (16S mt-rRNA) and 32 different proteins. The 54S large subunit contains a 23S rRNA (23S mt-rRNA) and 42 different proteins.

It localises to the mitochondrion. Functionally, component of the mitochondrial ribosome (mitoribosome), a dedicated translation machinery responsible for the synthesis of mitochondrial genome-encoded proteins, including at least some of the essential transmembrane subunits of the mitochondrial respiratory chain. The mitoribosomes are attached to the mitochondrial inner membrane and translation products are cotranslationally integrated into the membrane. This chain is Small ribosomal subunit protein uS15m (mrps28), found in Neurospora crassa (strain ATCC 24698 / 74-OR23-1A / CBS 708.71 / DSM 1257 / FGSC 987).